Here is a 157-residue protein sequence, read N- to C-terminus: Urease accessory protein UreE (157 aa).

It belongs to the UreE family.

The protein resides in the cytoplasm. Its function is as follows. Involved in urease metallocenter assembly. Binds nickel. Probably functions as a nickel donor during metallocenter assembly. This Corynebacterium glutamicum (strain ATCC 13032 / DSM 20300 / JCM 1318 / BCRC 11384 / CCUG 27702 / LMG 3730 / NBRC 12168 / NCIMB 10025 / NRRL B-2784 / 534) protein is Urease accessory protein UreE.